A 187-amino-acid polypeptide reads, in one-letter code: dTTP/UTP pyrophosphatase (187 aa).

Residue Asp-68 is the Proton acceptor of the active site.

This sequence belongs to the Maf family. YhdE subfamily. The cofactor is a divalent metal cation.

The protein localises to the cytoplasm. It catalyses the reaction dTTP + H2O = dTMP + diphosphate + H(+). The enzyme catalyses UTP + H2O = UMP + diphosphate + H(+). Its function is as follows. Nucleoside triphosphate pyrophosphatase that hydrolyzes dTTP and UTP. May have a dual role in cell division arrest and in preventing the incorporation of modified nucleotides into cellular nucleic acids. This Thermus thermophilus (strain ATCC BAA-163 / DSM 7039 / HB27) protein is dTTP/UTP pyrophosphatase.